Consider the following 330-residue polypeptide: Small ribosomal subunit protein uS2 (330 aa).

Belongs to the universal ribosomal protein uS2 family.

In Rhodopseudomonas palustris (strain BisA53), this protein is Small ribosomal subunit protein uS2.